We begin with the raw amino-acid sequence, 84 residues long: Cell division protein CrgA (84 aa).

2 consecutive transmembrane segments (helical) span residues 31 to 51 and 60 to 80; these read VAPV…VFYV and ALDN…FGVS.

The protein belongs to the CrgA family.

It is found in the cell membrane. Functionally, involved in cell division. Coordinates growth and cell division. Required for the formation of the sporulation septa. This chain is Cell division protein CrgA, found in Streptomyces avermitilis (strain ATCC 31267 / DSM 46492 / JCM 5070 / NBRC 14893 / NCIMB 12804 / NRRL 8165 / MA-4680).